A 585-amino-acid chain; its full sequence is Serine/threonine-protein kinase PknI (585 aa).

The Cytoplasmic segment spans residues 1-349 (MALASGVTFA…ASPTRRRPRR (349 aa)). One can recognise a Protein kinase domain in the interval 12–252 (YTVVRMLGCS…SCREFADAMN (241 aa)). ATP contacts are provided by residues 18-26 (LGCSAMGEV) and K41. K41, D90, and V92 together coordinate ADP. D137 (proton acceptor) is an active-site residue. Residues 350 to 370 (ILVGAVAVLLLAGLFAVGIVI) form a helical membrane-spanning segment. Residues 371 to 585 (GRKTNTTATE…PTTTAPGPGR (215 aa)) lie on the Extracellular side of the membrane. The disordered stretch occupies residues 546-585 (SGDLPPAVTVPDPATIPDTPDTTSTATLTPPTTTAPGPGR). A compositionally biased stretch (low complexity) spans 554-585 (TVPDPATIPDTPDTTSTATLTPPTTTAPGPGR).

It belongs to the protein kinase superfamily. Ser/Thr protein kinase family. Mn(2+) serves as cofactor. Autophosphorylated at serine and threonine residues.

It localises to the cytoplasm. It is found in the cell membrane. It catalyses the reaction L-seryl-[protein] + ATP = O-phospho-L-seryl-[protein] + ADP + H(+). The catalysed reaction is L-threonyl-[protein] + ATP = O-phospho-L-threonyl-[protein] + ADP + H(+). Plays an important role in slowing down the growth of mycobacteria within the infected host. This Mycobacterium bovis (strain ATCC BAA-935 / AF2122/97) protein is Serine/threonine-protein kinase PknI (pknI).